A 439-amino-acid polypeptide reads, in one-letter code: Membrane sensor protein UhpC (439 aa).

Over 1–25 (MLPFLKAPADAPLMTDKYEIDARYR) the chain is Cytoplasmic. A helical membrane pass occupies residues 26 to 45 (YWRRHILLTIWLGYALFYFT). At 46–66 (RKSFNAAVPEILANGVLSRSD) the chain is on the periplasmic side. A helical transmembrane segment spans residues 67–87 (IGLLATLFYITYGVSKFVSGI). Over 88 to 95 (VSDRSNAR) the chain is Cytoplasmic. A helical membrane pass occupies residues 96 to 118 (YFMGIGLIATGIINILFGFSTSL). Residues 119 to 121 (WAF) lie on the Periplasmic side of the membrane. The chain crosses the membrane as a helical span at residues 122 to 144 (AVLWVLNAFFQGWGSPVCARLLT). The Cytoplasmic portion of the chain corresponds to 145–162 (AWYSRTERGGWWALWNTA). The helical transmembrane segment at 163-183 (HNVGGALIPIVMAAAALHYGW) threads the bilayer. Arginine 184 is a topological domain (periplasmic). The chain crosses the membrane as a helical span at residues 185 to 205 (AGMMIAGCMAIVVGIFLCWRL). Residues 206–244 (RDRPQALGLPAVGEWRHDALEIAQQQEGAGLTRKEILTK) are Cytoplasmic-facing. A helical transmembrane segment spans residues 245 to 265 (YVLLNPYIWLLSFCYVLVYVV). The Periplasmic portion of the chain corresponds to 266-289 (RAAINDWGNLYMSETLGVDLVTAN). A helical membrane pass occupies residues 290–310 (TAVTMFELGGFIGALVAGWGS). Residues 311 to 322 (DKLFNGNRGPMN) are Cytoplasmic-facing. The chain crosses the membrane as a helical span at residues 323-343 (LIFAAGILLSVGSLWLMPFAS). Topologically, residues 344 to 349 (YVMQAT) are periplasmic. A helical membrane pass occupies residues 350 to 370 (CFFTIGFFVFGPQMLIGMAAA). The Cytoplasmic segment spans residues 371–379 (ECSHKEAAG). The chain crosses the membrane as a helical span at residues 380–400 (AATGFVGLFAYLGASLAGWPL). Residues 401 to 410 (AKVLDTWHWS) lie on the Periplasmic side of the membrane. Residues 411 to 431 (GFFVVISIAAGISALLLLPFL) form a helical membrane-spanning segment. Residues 432–439 (NAQTPREA) lie on the Cytoplasmic side of the membrane.

It belongs to the major facilitator superfamily. Organophosphate:Pi antiporter (OPA) (TC 2.A.1.4) family.

The protein localises to the cell inner membrane. Its function is as follows. Part of the UhpABC signaling cascade that controls the expression of the hexose phosphate transporter UhpT. UhpC senses external glucose-6-phosphate and interacts with the histidine kinase UhpB, leading to the stimulation of the autokinase activity of UhpB. The sequence is that of Membrane sensor protein UhpC from Escherichia coli (strain K12).